A 480-amino-acid chain; its full sequence is Immune evasion protein OPG047 (480 aa).

Positions 10–90 (CKNILALSMT…SYTGKVYIDS (81 aa)) constitute a BTB domain. One can recognise a BACK domain in the interval 125–223 (CVECYMMGIE…NYLSPRGINN (99 aa)). Kelch repeat units follow at residues 273–319 (VVYL…PANN), 320–363 (KLYV…SINN), 365–408 (IYVM…VFGR), 410–447 (LFLV…IVDN), and 448–480 (KLLL…WDGK).

The protein belongs to the orthopoxvirus OPG047 family.

Functionally, might have a role in the suppression of host immune response. This chain is Immune evasion protein OPG047 (OPG047), found in Vaccinia virus (strain Copenhagen) (VACV).